A 167-amino-acid chain; its full sequence is I-Kappa-B like protein F2 (167 aa).

3 ANK repeats span residues 54–86 (HGKQ…DING), 91–121 (FGNT…NMGI), and 125–154 (LFKT…RCGV).

This sequence belongs to the polydnaviridae I-Kappa-B-like protein family.

Its function is as follows. Suppresses the host immune response through NF-kappa-B inactivation. Possesses ankyrin repeat domains required for NF-kappa-B binding but lacks the regulatory regions required for dissociation from NF-kappa-B and degradation. Therefore, prevents host NF-kappa-B release and subsequent activation. The polypeptide is I-Kappa-B like protein F2 (F3) (Microplitis demolitor bracovirus (isolate Webb) (MdBV)).